Here is a 776-residue protein sequence, read N- to C-terminus: Protein translocase subunit SecA 2 (776 aa).

Residues Gln80, 98 to 102, and Asp486 contribute to the ATP site; that span reads GEGKT.

It belongs to the SecA family. In terms of assembly, monomer and homodimer. Part of the essential Sec protein translocation apparatus which comprises SecA, SecYEG and auxiliary proteins SecDF. Other proteins may also be involved.

It is found in the cell membrane. The protein resides in the cytoplasm. It carries out the reaction ATP + H2O + cellular proteinSide 1 = ADP + phosphate + cellular proteinSide 2.. Part of the Sec protein translocase complex. Interacts with the SecYEG preprotein conducting channel. Has a central role in coupling the hydrolysis of ATP to the transfer of proteins into and across the cell membrane, serving as an ATP-driven molecular motor driving the stepwise translocation of polypeptide chains across the membrane. In Listeria monocytogenes serotype 4b (strain F2365), this protein is Protein translocase subunit SecA 2.